Here is a 300-residue protein sequence, read N- to C-terminus: Metal tolerance protein 12 (300 aa).

The Cytoplasmic segment spans residues Met-1 to Lys-26. Residues Ile-27–Met-47 form a helical membrane-spanning segment. The Vacuolar segment spans residues Ser-48–Ser-50. Residues Leu-51–Leu-71 form a helical membrane-spanning segment. At Tyr-72 to Arg-91 the chain is on the cytoplasmic side. The helical transmembrane segment at Phe-92–Val-112 threads the bilayer. Topologically, residues Leu-113–Asn-128 are vacuolar. The chain crosses the membrane as a helical span at residues Ser-129–His-149. Residues Glu-150 to Gly-160 are Cytoplasmic-facing. A helical transmembrane segment spans residues Ile-161–Leu-181. Residues Ile-182 to Gly-186 are Vacuolar-facing. Residues Trp-187–Ile-207 form a helical membrane-spanning segment. Residues Pro-208–Ser-300 lie on the Cytoplasmic side of the membrane.

This sequence belongs to the cation diffusion facilitator (CDF) transporter (TC 2.A.4) family. SLC30A subfamily.

It localises to the vacuole membrane. Involved in sequestration of excess metal in the cytoplasm into vacuoles to maintain metal homeostasis. The chain is Metal tolerance protein 12 (MTP12) from Arabidopsis thaliana (Mouse-ear cress).